Reading from the N-terminus, the 508-residue chain is Photosystem II CP47 reaction center protein (508 aa).

6 consecutive transmembrane segments (helical) span residues 21 to 36 (SVHIMHTALVAGWAGS), 101 to 115 (IVFSGLCFLAAIWHW), 140 to 156 (GIHLFLSGVACFGFGAF), 203 to 218 (IAAGTLGILAGLFHLS), 237 to 252 (VLSSSIAAVFFAAFVV), and 457 to 472 (SFALLFFFGHIWHGSR).

It belongs to the PsbB/PsbC family. PsbB subfamily. As to quaternary structure, PSII is composed of 1 copy each of membrane proteins PsbA, PsbB, PsbC, PsbD, PsbE, PsbF, PsbH, PsbI, PsbJ, PsbK, PsbL, PsbM, PsbT, PsbX, PsbY, PsbZ, Psb30/Ycf12, at least 3 peripheral proteins of the oxygen-evolving complex and a large number of cofactors. It forms dimeric complexes. It depends on Binds multiple chlorophylls. PSII binds additional chlorophylls, carotenoids and specific lipids. as a cofactor.

It is found in the plastid. The protein localises to the chloroplast thylakoid membrane. Its function is as follows. One of the components of the core complex of photosystem II (PSII). It binds chlorophyll and helps catalyze the primary light-induced photochemical processes of PSII. PSII is a light-driven water:plastoquinone oxidoreductase, using light energy to abstract electrons from H(2)O, generating O(2) and a proton gradient subsequently used for ATP formation. The protein is Photosystem II CP47 reaction center protein of Lepidium virginicum (Virginia pepperweed).